The primary structure comprises 357 residues: Quinolinate synthase (357 aa).

The iminosuccinate site is built by His-50 and Ser-71. Cys-116 lines the [4Fe-4S] cluster pocket. Iminosuccinate is bound by residues 142–144 and Ser-159; that span reads YAN. Cys-203 contributes to the [4Fe-4S] cluster binding site. Residues 229–231 and Thr-246 each bind iminosuccinate; that span reads HPE. Residue Cys-300 participates in [4Fe-4S] cluster binding.

Belongs to the quinolinate synthase family. Type 1 subfamily. It depends on [4Fe-4S] cluster as a cofactor.

The protein resides in the cytoplasm. The enzyme catalyses iminosuccinate + dihydroxyacetone phosphate = quinolinate + phosphate + 2 H2O + H(+). It participates in cofactor biosynthesis; NAD(+) biosynthesis; quinolinate from iminoaspartate: step 1/1. Catalyzes the condensation of iminoaspartate with dihydroxyacetone phosphate to form quinolinate. The protein is Quinolinate synthase of Shewanella sp. (strain MR-4).